A 461-amino-acid polypeptide reads, in one-letter code: Cyclin-A2-4 (461 aa).

The protein belongs to the cyclin family. Cyclin AB subfamily.

The sequence is that of Cyclin-A2-4 (CYCA2-4) from Arabidopsis thaliana (Mouse-ear cress).